A 216-amino-acid chain; its full sequence is GTP cyclohydrolase 1 (216 aa).

The Zn(2+) site is built by cysteine 108, histidine 111, and cysteine 179.

This sequence belongs to the GTP cyclohydrolase I family. In terms of assembly, toroid-shaped homodecamer, composed of two pentamers of five dimers.

The enzyme catalyses GTP + H2O = 7,8-dihydroneopterin 3'-triphosphate + formate + H(+). Its pathway is cofactor biosynthesis; 7,8-dihydroneopterin triphosphate biosynthesis; 7,8-dihydroneopterin triphosphate from GTP: step 1/1. This is GTP cyclohydrolase 1 from Shewanella sp. (strain MR-7).